Consider the following 120-residue polypeptide: NAD(P)H-quinone oxidoreductase subunit 3, chloroplastic (120 aa).

The next 3 helical transmembrane spans lie at 10 to 30 (FWLF…ISKI), 64 to 84 (MFAL…PWAM), and 89 to 109 (LGIS…IGLI).

This sequence belongs to the complex I subunit 3 family. NDH is composed of at least 16 different subunits, 5 of which are encoded in the nucleus.

The protein resides in the plastid. Its subcellular location is the chloroplast thylakoid membrane. The catalysed reaction is a plastoquinone + NADH + (n+1) H(+)(in) = a plastoquinol + NAD(+) + n H(+)(out). The enzyme catalyses a plastoquinone + NADPH + (n+1) H(+)(in) = a plastoquinol + NADP(+) + n H(+)(out). Functionally, NDH shuttles electrons from NAD(P)H:plastoquinone, via FMN and iron-sulfur (Fe-S) centers, to quinones in the photosynthetic chain and possibly in a chloroplast respiratory chain. The immediate electron acceptor for the enzyme in this species is believed to be plastoquinone. Couples the redox reaction to proton translocation, and thus conserves the redox energy in a proton gradient. The protein is NAD(P)H-quinone oxidoreductase subunit 3, chloroplastic of Angiopteris evecta (Mule's foot fern).